Consider the following 123-residue polypeptide: Protein Wnt-3 (123 aa).

A lipid anchor (O-palmitoleoyl serine; by PORCN) is attached at Ser1. Cysteines 89 and 104 form a disulfide. N-linked (GlcNAc...) asparagine glycosylation occurs at Asn90.

Belongs to the Wnt family. Post-translationally, palmitoleoylation is required for efficient binding to frizzled receptors. Depalmitoleoylation leads to Wnt signaling pathway inhibition.

The protein resides in the secreted. It localises to the extracellular space. Its subcellular location is the extracellular matrix. In terms of biological role, ligand for members of the frizzled family of seven transmembrane receptors. Functions in the canonical Wnt signaling pathway that results in activation of transcription factors of the TCF/LEF family. Required for normal embryonic development. In Eptatretus stoutii (Pacific hagfish), this protein is Protein Wnt-3 (WNT-3).